A 125-amino-acid polypeptide reads, in one-letter code: uncharacterized protein (125 aa).

2 helical membrane-spanning segments follow: residues 22-44 (TPLM…NAAV) and 54-73 (YMGI…SVLM).

The protein belongs to the bacteriophage holin family. Cp-1 holin subfamily.

Its subcellular location is the cell membrane. This is an uncharacterized protein from Clostridium acetobutylicum (strain ATCC 824 / DSM 792 / JCM 1419 / IAM 19013 / LMG 5710 / NBRC 13948 / NRRL B-527 / VKM B-1787 / 2291 / W).